The sequence spans 206 residues: FMN-dependent NADH:quinone oxidoreductase 1 (206 aa).

Residues Ser-10 and 16-18 each bind FMN; that span reads SLS.

Belongs to the azoreductase type 1 family. In terms of assembly, homodimer. It depends on FMN as a cofactor.

It carries out the reaction 2 a quinone + NADH + H(+) = 2 a 1,4-benzosemiquinone + NAD(+). It catalyses the reaction N,N-dimethyl-1,4-phenylenediamine + anthranilate + 2 NAD(+) = 2-(4-dimethylaminophenyl)diazenylbenzoate + 2 NADH + 2 H(+). Functionally, quinone reductase that provides resistance to thiol-specific stress caused by electrophilic quinones. In terms of biological role, also exhibits azoreductase activity. Catalyzes the reductive cleavage of the azo bond in aromatic azo compounds to the corresponding amines. The sequence is that of FMN-dependent NADH:quinone oxidoreductase 1 from Burkholderia lata (strain ATCC 17760 / DSM 23089 / LMG 22485 / NCIMB 9086 / R18194 / 383).